The sequence spans 355 residues: Peptide chain release factor 1 (355 aa).

Glutamine 234 carries the post-translational modification N5-methylglutamine.

This sequence belongs to the prokaryotic/mitochondrial release factor family. Post-translationally, methylated by PrmC. Methylation increases the termination efficiency of RF1.

The protein localises to the cytoplasm. Peptide chain release factor 1 directs the termination of translation in response to the peptide chain termination codons UAG and UAA. This is Peptide chain release factor 1 from Metamycoplasma arthritidis (strain 158L3-1) (Mycoplasma arthritidis).